We begin with the raw amino-acid sequence, 431 residues long: uncharacterized protein (431 aa).

12 helical membrane-spanning segments follow: residues 33 to 53, 63 to 83, 111 to 131, 143 to 163, 175 to 195, 197 to 217, 241 to 261, 273 to 293, 318 to 338, 358 to 378, 381 to 401, and 407 to 427; these read VARV…VIYL, FSVF…ANGL, VSGM…PLWS, VALL…LGML, LMVA…VIGW, LVGF…MLMT, AHSI…PVLL, GVVI…LTAM, LIGG…PWIM, AAAV…AAAL, AYSL…LLPL, and TVVA…VALA.

To M.tuberculosis Rv1510 and M.bovis Mb3654.

The protein localises to the cell membrane. This is an uncharacterized protein from Mycobacterium tuberculosis (strain ATCC 25618 / H37Rv).